A 318-amino-acid chain; its full sequence is Protein-L-histidine N-pros-methyltransferase (318 aa).

An N-terminal signal peptide occupies residues 1–18; it reads MRLLAGWLCLSLASVWLA. N-linked (GlcNAc...) asparagine glycosylation is present at Asn-35. Glu-174, Asn-210, and Tyr-295 together coordinate S-adenosyl-L-homocysteine.

The protein belongs to the METTL9 family. In terms of tissue distribution, expressed in liver, colon, small intestine, skin, kidney and to a lesser extent in spleen, lung, thymus and stomach. Not detected in fibroblast and endothelial cells.

Its subcellular location is the endoplasmic reticulum. The protein localises to the mitochondrion. The enzyme catalyses L-histidyl-[protein] + S-adenosyl-L-methionine = N(pros)-methyl-L-histidyl-[protein] + S-adenosyl-L-homocysteine + H(+). In terms of biological role, protein-histidine N-methyltransferase that specifically catalyzes 1-methylhistidine (pros-methylhistidine) methylation of target proteins. Specifically methylates the second His of proteins with a His-x-His (HxH) motif (where 'x' is preferably a small amino acid), while exploiting the first one as a recognition signature. Catalyzes methylation of target proteins such as S100A9, NDUFB3, SLC39A5, SLC39A7, ARMC6 and DNAJB12; 1-methylhistidine modification may affect the binding of zinc and other metals to its target proteins. Constitutes the main methyltransferase for the 1-methylhistidine modification in cell. The sequence is that of Protein-L-histidine N-pros-methyltransferase from Mus musculus (Mouse).